The primary structure comprises 216 residues: ATP-dependent Clp protease proteolytic subunit (216 aa).

S101 serves as the catalytic Nucleophile. Residue H126 is part of the active site.

The protein belongs to the peptidase S14 family. Component of the chloroplastic Clp protease core complex.

The protein localises to the plastid. The protein resides in the chloroplast stroma. It catalyses the reaction Hydrolysis of proteins to small peptides in the presence of ATP and magnesium. alpha-casein is the usual test substrate. In the absence of ATP, only oligopeptides shorter than five residues are hydrolyzed (such as succinyl-Leu-Tyr-|-NHMec, and Leu-Tyr-Leu-|-Tyr-Trp, in which cleavage of the -Tyr-|-Leu- and -Tyr-|-Trp bonds also occurs).. Functionally, cleaves peptides in various proteins in a process that requires ATP hydrolysis. Has a chymotrypsin-like activity. Plays a major role in the degradation of misfolded proteins. This Oryza nivara (Indian wild rice) protein is ATP-dependent Clp protease proteolytic subunit.